Reading from the N-terminus, the 132-residue chain is RuBisCO chaperone RbcX (132 aa).

The interval H110–H132 is disordered. Over residues L111–H132 the composition is skewed to polar residues.

The protein belongs to the RbcX family. In terms of assembly, homodimer. Interacts with the exposed C-terminal peptide of RbcL via its central cleft, contacts a second RbcL monomer via its peripheral polar surface. RbcX and Raf1 can bind simultaneously to RbcL.

It is found in the carboxysome. The protein resides in the cytoplasm. In terms of biological role, an RbcL-specific chaperone. The central cleft of the RbcX homodimer (RbcX2) binds the C-terminus of an RbcL monomer, stabilizing the C-terminus and probably preventing its reassociation with chaperonin GroEL-ES. At the same time the peripheral region of RbcX2 binds a second RbcL monomer, bridging the RbcL homodimers in the correct orientation. The RbcX2(2)-bound RbcL dimers then assemble into the RbcL8 core (RbcL8-(RbcX2)8). RbcS binding triggers the release of RbcX2. Its function is as follows. When rbcL-rbcX-rbcS or rbcL-rbcS were overexpressed in E.coli no change in reconstituted RuBisCO activity was observed, which suggests RbcX plays no role in RuBisCO assembly in this system. However in PubMed:8472962 E.coli chaperones groL and groS were also overexpressed, which may compensate for lack of rbcX. This Nostoc sp. (strain PCC 7120 / SAG 25.82 / UTEX 2576) protein is RuBisCO chaperone RbcX.